The chain runs to 187 residues: dCTP deaminase (187 aa).

DCTP contacts are provided by residues 110–115 (KSTYAR), 134–136 (TLE), glutamine 155, tyrosine 169, and glutamine 179. Glutamate 136 serves as the catalytic Proton donor/acceptor.

The protein belongs to the dCTP deaminase family. As to quaternary structure, homotrimer.

It carries out the reaction dCTP + H2O + H(+) = dUTP + NH4(+). The protein operates within pyrimidine metabolism; dUMP biosynthesis; dUMP from dCTP (dUTP route): step 1/2. Catalyzes the deamination of dCTP to dUTP. This Bordetella petrii (strain ATCC BAA-461 / DSM 12804 / CCUG 43448) protein is dCTP deaminase.